The following is a 298-amino-acid chain: Mitochondrial distribution and morphology protein 12 (298 aa).

The 298-residue stretch at 1–298 (MSIELDWTGL…VYPHFYTLYL (298 aa)) folds into the SMP-LTD domain. The interval 118–142 (SEHEESLSRWSDTESETGTCDSSSL) is disordered. Polar residues predominate over residues 133-142 (ETGTCDSSSL).

This sequence belongs to the MDM12 family. As to quaternary structure, component of the ER-mitochondria encounter structure (ERMES) or MDM complex, composed of MMM1, MDM10, MDM12 and MDM34. An MMM1 homodimer associates with one molecule of MDM12 on each side in a pairwise head-to-tail manner, and the SMP-LTD domains of MMM1 and MDM12 generate a continuous hydrophobic tunnel for phospholipid trafficking.

The protein localises to the mitochondrion outer membrane. Its subcellular location is the endoplasmic reticulum membrane. Functionally, component of the ERMES/MDM complex, which serves as a molecular tether to connect the endoplasmic reticulum (ER) and mitochondria. Components of this complex are involved in the control of mitochondrial shape and protein biogenesis, and function in nonvesicular lipid trafficking between the ER and mitochondria. MDM12 is required for the interaction of the ER-resident membrane protein MMM1 and the outer mitochondrial membrane-resident beta-barrel protein MDM10. The MDM12-MMM1 subcomplex functions in the major beta-barrel assembly pathway that is responsible for biogenesis of all mitochondrial outer membrane beta-barrel proteins, and acts in a late step after the SAM complex. The MDM10-MDM12-MMM1 subcomplex further acts in the TOM40-specific pathway after the action of the MDM12-MMM1 complex. Essential for establishing and maintaining the structure of mitochondria and maintenance of mtDNA nucleoids. The chain is Mitochondrial distribution and morphology protein 12 from Malassezia globosa (strain ATCC MYA-4612 / CBS 7966) (Dandruff-associated fungus).